Reading from the N-terminus, the 338-residue chain is Holliday junction branch migration complex subunit RuvB (338 aa).

Positions 4–186 (ADRLIAPDNP…FGITQRLEYY (183 aa)) are large ATPase domain (RuvB-L). ATP-binding positions include Ile-25, Arg-26, Gly-67, Lys-70, Thr-71, Thr-72, 133–135 (EDY), Arg-176, Tyr-186, and Arg-223. Thr-71 contacts Mg(2+). Positions 187–257 (KVEDLQNIVQ…VADKALNMLD (71 aa)) are small ATPAse domain (RuvB-S). The segment at 260 to 338 (AKGFDYMDRK…HFGIDKPSNR (79 aa)) is head domain (RuvB-H). Residues Arg-296, Arg-315, and Arg-320 each coordinate DNA.

This sequence belongs to the RuvB family. In terms of assembly, homohexamer. Forms an RuvA(8)-RuvB(12)-Holliday junction (HJ) complex. HJ DNA is sandwiched between 2 RuvA tetramers; dsDNA enters through RuvA and exits via RuvB. An RuvB hexamer assembles on each DNA strand where it exits the tetramer. Each RuvB hexamer is contacted by two RuvA subunits (via domain III) on 2 adjacent RuvB subunits; this complex drives branch migration. In the full resolvosome a probable DNA-RuvA(4)-RuvB(12)-RuvC(2) complex forms which resolves the HJ.

It is found in the cytoplasm. It carries out the reaction ATP + H2O = ADP + phosphate + H(+). Its function is as follows. The RuvA-RuvB-RuvC complex processes Holliday junction (HJ) DNA during genetic recombination and DNA repair, while the RuvA-RuvB complex plays an important role in the rescue of blocked DNA replication forks via replication fork reversal (RFR). RuvA specifically binds to HJ cruciform DNA, conferring on it an open structure. The RuvB hexamer acts as an ATP-dependent pump, pulling dsDNA into and through the RuvAB complex. RuvB forms 2 homohexamers on either side of HJ DNA bound by 1 or 2 RuvA tetramers; 4 subunits per hexamer contact DNA at a time. Coordinated motions by a converter formed by DNA-disengaged RuvB subunits stimulates ATP hydrolysis and nucleotide exchange. Immobilization of the converter enables RuvB to convert the ATP-contained energy into a lever motion, pulling 2 nucleotides of DNA out of the RuvA tetramer per ATP hydrolyzed, thus driving DNA branch migration. The RuvB motors rotate together with the DNA substrate, which together with the progressing nucleotide cycle form the mechanistic basis for DNA recombination by continuous HJ branch migration. Branch migration allows RuvC to scan DNA until it finds its consensus sequence, where it cleaves and resolves cruciform DNA. This chain is Holliday junction branch migration complex subunit RuvB, found in Vibrio atlanticus (strain LGP32) (Vibrio splendidus (strain Mel32)).